Reading from the N-terminus, the 234-residue chain is DNA repair protein RecO (234 aa).

This sequence belongs to the RecO family.

Its function is as follows. Involved in DNA repair and RecF pathway recombination. In Hamiltonella defensa subsp. Acyrthosiphon pisum (strain 5AT), this protein is DNA repair protein RecO.